Here is a 358-residue protein sequence, read N- to C-terminus: Transcription factor PCF6 (358 aa).

The disordered stretch occupies residues 1–29 (MEAAVGDGEGGGGGGGRGKRGRGGGGGEM). The span at 7-16 (DGEGGGGGGG) shows a compositional bias: gly residues. The 59-residue stretch at 52 to 110 (GKDRHSKVYTAKGIRDRRVRLSVATAIQFYDLQDRLGFDQPSKAIEWLINAASPAIDTL) folds into the TCP domain. Disordered stretches follow at residues 127 to 163 (ADAAPTRRRSQQQQQQLSNKSGCSSTSETSKGSDKEV) and 282 to 308 (ANRGTLQSNSPSNMSGHHHHHHQQQLQ). Polar residues-rich tracts occupy residues 143 to 156 (LSNKSGCSSTSETS) and 285 to 296 (GTLQSNSPSNMS).

As to quaternary structure, forms homodimers and heterodimers.

Its subcellular location is the nucleus. Its function is as follows. Transcription activator. Binds the promoter core sequence 5'-GGNCC-3'. This is Transcription factor PCF6 (PCF6) from Oryza sativa subsp. indica (Rice).